The following is a 319-amino-acid chain: MTKIELRALGNTGLKVSAVGFGASPLGSVFGPVAEDDAVATVREAFRLGINFFDTSPYYGGTLSEKMLGKGLKALQVPRSDYIVATKCGRYKEGFDFSAERVRKSIDESLERLQLDYVDILHCHDIEFGSLDQIVSETIPALQKLKQEGKTRFIGITGLPLDIFTYVLDRVPPGTVDVILSYCHYGVNDSTLLDLLPYLKSKGVGVISASPLAMGLLTEQGPPEWHPASPELKSASKAAVAHCKSKGKKITKLALQYSLANKEISSVLVGMSSVSQVEENVAAVTELESLGMDQETLSEVEAILEPVKNLTWPSGIHQN.

The active-site Proton donor is the tyrosine 59. In terms of domain architecture, SIS spans 122 to 269 (HCHDIEFGSL…ANKEISSVLV (148 aa)). Residue histidine 124 coordinates substrate.

This sequence belongs to the aldo/keto reductase family.

The catalysed reaction is L-galactose + NAD(+) = L-galactono-1,4-lactone + NADH + H(+). Catalyzes the oxidation of L-galactose to L-galactono-1,4-lactone in the presence of NAD(+). Uses NAD(+) as a hydrogen acceptor much more efficiently than NADP(+). The polypeptide is L-galactose dehydrogenase (LGALDH) (Arabidopsis thaliana (Mouse-ear cress)).